Here is a 444-residue protein sequence, read N- to C-terminus: Orexin receptor type 2 (444 aa).

Positions 1–10 (MSGTKLEDSP) are enriched in basic and acidic residues. A disordered region spans residues 1–30 (MSGTKLEDSPPCRNWSSAPELNETQEPFLN). At 1 to 54 (MSGTKLEDSPPCRNWSSAPELNETQEPFLNPTDYDDEEFLRYLWREYLHPKEYE) the chain is on the extracellular side. N-linked (GlcNAc...) asparagine glycans are attached at residues Asn14 and Asn22. Residues 14 to 27 (NWSSAPELNETQEP) show a composition bias toward polar residues. The interval 33–49 (DYDDEEFLRYLWREYLH) is required for response to orexin-A. A helical membrane pass occupies residues 55-75 (WVLIAGYIIVFVVALVGNVLV). Topologically, residues 76 to 88 (CVAVWKNHHMRTV) are cytoplasmic. The helical transmembrane segment at 89 to 110 (TNYFIVNLSLADVLVTITCLPA) threads the bilayer. The Extracellular segment spans residues 111 to 127 (TLVVDITETWFFGQSLC). Cys127 and Cys210 form a disulfide bridge. The helical transmembrane segment at 128–150 (KVIPYLQTVSVSVSVLTLSCIAL) threads the bilayer. The Cytoplasmic segment spans residues 151–170 (DRWYAICHPLMFKSTAKRAR). The chain crosses the membrane as a helical span at residues 171 to 191 (NSIVIIWIVSCIIMIPQAIVM). The Extracellular segment spans residues 192–222 (ECSTMLPGLANKTTLFTVCDERWGGEIYPKM). Residue Asn202 is glycosylated (N-linked (GlcNAc...) asparagine). Residues 223 to 243 (YHICFFLVTYMAPLCLMVLAY) form a helical membrane-spanning segment. Residues 244 to 304 (LQIFRKLWCR…QIRARRKTAR (61 aa)) lie on the Cytoplasmic side of the membrane. The chain crosses the membrane as a helical span at residues 305–326 (MLMVVLLVFAICYLPISILNVL). Residues 327–342 (KRVFGMFTHTEDRETV) lie on the Extracellular side of the membrane. A helical membrane pass occupies residues 343–366 (YAWFTFSHWLVYANSAANPIIYNF). Residues 367–444 (LSGKFREEFK…ANGAGPLQNW (78 aa)) are Cytoplasmic-facing.

Belongs to the G-protein coupled receptor 1 family.

The protein resides in the cell membrane. Functionally, nonselective, high-affinity receptor for both orexin-A and orexin-B neuropeptides. Triggers an increase in cytoplasmic Ca(2+) levels in response to orexin-A binding. In Canis lupus familiaris (Dog), this protein is Orexin receptor type 2 (HCRTR2).